Reading from the N-terminus, the 305-residue chain is Glycine--tRNA ligase alpha subunit (305 aa).

Belongs to the class-II aminoacyl-tRNA synthetase family. Tetramer of two alpha and two beta subunits.

Its subcellular location is the cytoplasm. The enzyme catalyses tRNA(Gly) + glycine + ATP = glycyl-tRNA(Gly) + AMP + diphosphate. The protein is Glycine--tRNA ligase alpha subunit of Janthinobacterium sp. (strain Marseille) (Minibacterium massiliensis).